Consider the following 387-residue polypeptide: Exodeoxyribonuclease 7 large subunit (387 aa).

It belongs to the XseA family. As to quaternary structure, heterooligomer composed of large and small subunits.

It localises to the cytoplasm. The enzyme catalyses Exonucleolytic cleavage in either 5'- to 3'- or 3'- to 5'-direction to yield nucleoside 5'-phosphates.. Functionally, bidirectionally degrades single-stranded DNA into large acid-insoluble oligonucleotides, which are then degraded further into small acid-soluble oligonucleotides. This is Exodeoxyribonuclease 7 large subunit from Campylobacter jejuni subsp. doylei (strain ATCC BAA-1458 / RM4099 / 269.97).